The following is a 436-amino-acid chain: GTPase Der (436 aa).

EngA-type G domains follow at residues 4 to 167 (PVVA…KNLP) and 176 to 351 (VQFC…ENHA). GTP-binding positions include 10–17 (GRPNVGKS), 57–61 (DTGGI), 119–122 (NKLD), 182–189 (GRPNVGKS), 229–233 (DTAGM), and 294–297 (NKWD). The region spanning 352–436 (MRVQTNILND…PIKIFARARK (85 aa)) is the KH-like domain.

This sequence belongs to the TRAFAC class TrmE-Era-EngA-EngB-Septin-like GTPase superfamily. EngA (Der) GTPase family. Associates with the 50S ribosomal subunit.

In terms of biological role, GTPase that plays an essential role in the late steps of ribosome biogenesis. The sequence is that of GTPase Der from Bacillus pumilus (strain SAFR-032).